The primary structure comprises 273 residues: Protein FAM210A (273 aa).

The disordered stretch occupies residues 95–116 (VLSSSSTSQETPSEKKEEPDPL). Basic and acidic residues predominate over residues 106 to 116 (PSEKKEEPDPL). Positions 118–230 (DKSISLYQRF…GYMSTPPPVK (113 aa)) constitute a DUF1279 domain. The chain crosses the membrane as a helical span at residues 138–158 (LIPVHLITSGIWFGTFYYASI). Residues 233–272 (LQGRMEETKELISEKMEETKDRLTEKLQETKEKVSFKKKV) are a coiled coil. The interval 247–273 (KMEETKDRLTEKLQETKEKVSFKKKVE) is disordered.

This sequence belongs to the FAM210 family. As to quaternary structure, interacts with ATAD3A.

The protein resides in the membrane. It is found in the mitochondrion. The protein localises to the cytoplasm. In terms of biological role, may play a role in the structure and strength of both muscle and bone. The polypeptide is Protein FAM210A (Fam210a) (Rattus norvegicus (Rat)).